The sequence spans 138 residues: Nucleoside diphosphate kinase (138 aa).

ATP is bound by residues K10, F58, R86, T92, R103, and N113. H116 (pros-phosphohistidine intermediate) is an active-site residue.

This sequence belongs to the NDK family. Homotetramer. Requires Mg(2+) as cofactor.

The protein localises to the cytoplasm. It catalyses the reaction a 2'-deoxyribonucleoside 5'-diphosphate + ATP = a 2'-deoxyribonucleoside 5'-triphosphate + ADP. It carries out the reaction a ribonucleoside 5'-diphosphate + ATP = a ribonucleoside 5'-triphosphate + ADP. Its function is as follows. Major role in the synthesis of nucleoside triphosphates other than ATP. The ATP gamma phosphate is transferred to the NDP beta phosphate via a ping-pong mechanism, using a phosphorylated active-site intermediate. This chain is Nucleoside diphosphate kinase, found in Glaesserella parasuis serovar 5 (strain SH0165) (Haemophilus parasuis).